The chain runs to 488 residues: Probable malate:quinone oxidoreductase (488 aa).

This sequence belongs to the MQO family. FAD is required as a cofactor.

The catalysed reaction is (S)-malate + a quinone = a quinol + oxaloacetate. It participates in carbohydrate metabolism; tricarboxylic acid cycle; oxaloacetate from (S)-malate (quinone route): step 1/1. In Neisseria meningitidis serogroup B (strain ATCC BAA-335 / MC58), this protein is Probable malate:quinone oxidoreductase.